A 261-amino-acid polypeptide reads, in one-letter code: Mlc titration factor A (261 aa).

Residues His-111, His-148, His-152, and Glu-211 each coordinate Zn(2+).

This sequence belongs to the MtfA family. As to quaternary structure, interacts with Mlc. Zn(2+) serves as cofactor.

The protein resides in the cytoplasm. Involved in the modulation of the activity of the glucose-phosphotransferase system (glucose-PTS). Interacts with the transcriptional repressor Mlc, preventing its interaction with DNA and leading to the modulation of expression of genes regulated by Mlc, including ptsG, which encodes the PTS system glucose-specific EIICB component. Its function is as follows. Shows zinc-dependent metallopeptidase activity. The sequence is that of Mlc titration factor A from Edwardsiella ictaluri (strain 93-146).